A 546-amino-acid polypeptide reads, in one-letter code: Glucose-6-phosphate isomerase (546 aa).

The Proton donor role is filled by glutamate 356. Residues histidine 387 and lysine 507 contribute to the active site.

The protein belongs to the GPI family.

The protein resides in the cytoplasm. The enzyme catalyses alpha-D-glucose 6-phosphate = beta-D-fructose 6-phosphate. It functions in the pathway carbohydrate biosynthesis; gluconeogenesis. Its pathway is carbohydrate degradation; glycolysis; D-glyceraldehyde 3-phosphate and glycerone phosphate from D-glucose: step 2/4. Functionally, catalyzes the reversible isomerization of glucose-6-phosphate to fructose-6-phosphate. This is Glucose-6-phosphate isomerase from Syntrophus aciditrophicus (strain SB).